Here is a 313-residue protein sequence, read N- to C-terminus: Probable GTP 3',8-cyclase (313 aa).

Residues 4-224 enclose the Radical SAM core domain; it reads VYGRELEDLR…EIRNKHKRPR (221 aa). GTP is bound at residue arginine 13. [4Fe-4S] cluster is bound by residues cysteine 20, cysteine 24, and cysteine 27. Lysine 60 is a binding site for GTP. S-adenosyl-L-methionine is bound at residue glycine 64. Threonine 90 provides a ligand contact to GTP. Serine 114 serves as a coordination point for S-adenosyl-L-methionine. Lysine 151 lines the GTP pocket. Residues cysteine 244 and cysteine 247 each coordinate [4Fe-4S] cluster. 249 to 251 contributes to the GTP binding site; that stretch reads RIR. Position 261 (cysteine 261) interacts with [4Fe-4S] cluster.

Belongs to the radical SAM superfamily. MoaA family. It depends on [4Fe-4S] cluster as a cofactor.

It catalyses the reaction GTP + AH2 + S-adenosyl-L-methionine = (8S)-3',8-cyclo-7,8-dihydroguanosine 5'-triphosphate + 5'-deoxyadenosine + L-methionine + A + H(+). It participates in cofactor biosynthesis; molybdopterin biosynthesis. Catalyzes the cyclization of GTP to (8S)-3',8-cyclo-7,8-dihydroguanosine 5'-triphosphate. This Sulfolobus acidocaldarius (strain ATCC 33909 / DSM 639 / JCM 8929 / NBRC 15157 / NCIMB 11770) protein is Probable GTP 3',8-cyclase.